A 278-amino-acid polypeptide reads, in one-letter code: Large ribosomal subunit protein uL2 (278 aa).

Disordered regions lie at residues 1–59 (MAIR…GGHK) and 222–278 (RGAA…NKKR). The span at 16–27 (SSVSEFSEITRS) shows a compositional bias: polar residues. 2 stretches are compositionally biased toward basic residues: residues 45 to 59 (VHGH…GGHK) and 269 to 278 (VRRRRPNKKR).

The protein belongs to the universal ribosomal protein uL2 family. Part of the 50S ribosomal subunit. Forms a bridge to the 30S subunit in the 70S ribosome.

Functionally, one of the primary rRNA binding proteins. Required for association of the 30S and 50S subunits to form the 70S ribosome, for tRNA binding and peptide bond formation. It has been suggested to have peptidyltransferase activity; this is somewhat controversial. Makes several contacts with the 16S rRNA in the 70S ribosome. The polypeptide is Large ribosomal subunit protein uL2 (Corynebacterium urealyticum (strain ATCC 43042 / DSM 7109)).